We begin with the raw amino-acid sequence, 190 residues long: Ribosome maturation factor RimM (190 aa).

Positions 95–171 constitute a PRC barrel domain; sequence DPDEFYDHEL…VVMIEPPEGL (77 aa). Positions 169–190 are disordered; sequence EGLLDPDFGDKSNSDNSNSDND.

It belongs to the RimM family. Binds ribosomal protein uS19.

Its subcellular location is the cytoplasm. Functionally, an accessory protein needed during the final step in the assembly of 30S ribosomal subunit, possibly for assembly of the head region. Essential for efficient processing of 16S rRNA. May be needed both before and after RbfA during the maturation of 16S rRNA. It has affinity for free ribosomal 30S subunits but not for 70S ribosomes. The protein is Ribosome maturation factor RimM of Rhodococcus erythropolis (strain PR4 / NBRC 100887).